The chain runs to 358 residues: MQKNDDLLRERRKDEHVALGVKQNEQLAPSSLEDIQLIGTSIPRYNVKDIDLTTTIVGTNVPFPLYINAMTGGSRHTKKINAELAEIAREAAIPMAVGSQSAALKNSSLIDTYKIVREINPNGMILANISPEVALQEGLRAIEMLEANALQIHINPAQELVMQEGDRSFSHWLTRIEEYVKLSPVPVVVKEVGFGMTRETVKTLADIGVQTVDLAGKGGTNFAQIENDRRRDQAYDFLLDWGISTGQALIDMQHQDAPKIAYLASGGIRNPLDIVKALALGADSVGMAGQIIYSLKKEGVTKTIEKLELWKEQLRGLFVLANAKNISELKTTPLIISGELAKWGALREIDLVKLANRK.

Residue 12–13 (RK) coordinates substrate. FMN contacts are provided by residues 69-71 (AMT), S99, and N128. Q158 serves as a coordination point for substrate. Residue E159 participates in Mg(2+) binding. Residues K190, T220, 267 to 269 (GIR), and 288 to 289 (AG) each bind FMN.

It belongs to the IPP isomerase type 2 family. As to quaternary structure, homooctamer. Dimer of tetramers. FMN serves as cofactor. Requires NADPH as cofactor. Mg(2+) is required as a cofactor.

It is found in the cytoplasm. It catalyses the reaction isopentenyl diphosphate = dimethylallyl diphosphate. Its function is as follows. Involved in the biosynthesis of isoprenoids. Catalyzes the 1,3-allylic rearrangement of the homoallylic substrate isopentenyl (IPP) to its allylic isomer, dimethylallyl diphosphate (DMAPP). In Listeria monocytogenes serotype 4b (strain CLIP80459), this protein is Isopentenyl-diphosphate delta-isomerase.